The primary structure comprises 269 residues: 4-hydroxy-tetrahydrodipicolinate reductase (269 aa).

NAD(+) is bound by residues 8–13 (GAAGRM) and E34. R35 contributes to the NADP(+) binding site. Residues 98 to 100 (GTT) and 122 to 125 (APNY) each bind NAD(+). The active-site Proton donor/acceptor is the H155. H156 is a (S)-2,3,4,5-tetrahydrodipicolinate binding site. K159 serves as the catalytic Proton donor. Residue 165–166 (GT) participates in (S)-2,3,4,5-tetrahydrodipicolinate binding.

It belongs to the DapB family.

It is found in the cytoplasm. It carries out the reaction (S)-2,3,4,5-tetrahydrodipicolinate + NAD(+) + H2O = (2S,4S)-4-hydroxy-2,3,4,5-tetrahydrodipicolinate + NADH + H(+). It catalyses the reaction (S)-2,3,4,5-tetrahydrodipicolinate + NADP(+) + H2O = (2S,4S)-4-hydroxy-2,3,4,5-tetrahydrodipicolinate + NADPH + H(+). It participates in amino-acid biosynthesis; L-lysine biosynthesis via DAP pathway; (S)-tetrahydrodipicolinate from L-aspartate: step 4/4. Functionally, catalyzes the conversion of 4-hydroxy-tetrahydrodipicolinate (HTPA) to tetrahydrodipicolinate. In Vibrio vulnificus (strain CMCP6), this protein is 4-hydroxy-tetrahydrodipicolinate reductase.